We begin with the raw amino-acid sequence, 87 residues long: RNA-binding protein Hfq (87 aa).

Positions 9 to 68 (DPFLNALRRERIPVSIYLVNGIKLQGQIESFDQFVILLKNTVSQMVYKHAISTVVPARAV) constitute a Sm domain.

The protein belongs to the Hfq family. In terms of assembly, homohexamer.

Its function is as follows. RNA chaperone that binds small regulatory RNA (sRNAs) and mRNAs to facilitate mRNA translational regulation in response to envelope stress, environmental stress and changes in metabolite concentrations. Also binds with high specificity to tRNAs. The polypeptide is RNA-binding protein Hfq (Aeromonas hydrophila subsp. hydrophila (strain ATCC 7966 / DSM 30187 / BCRC 13018 / CCUG 14551 / JCM 1027 / KCTC 2358 / NCIMB 9240 / NCTC 8049)).